A 538-amino-acid polypeptide reads, in one-letter code: Cytochrome P450 monooxygenase xanG (538 aa).

Residues Met44–Leu64 traverse the membrane as a helical segment. Asn378 is a glycosylation site (N-linked (GlcNAc...) asparagine). Heme is bound at residue Cys489.

This sequence belongs to the cytochrome P450 family. Requires heme as cofactor.

The protein localises to the membrane. The protein operates within secondary metabolite biosynthesis. Functionally, cytochrome P450 monooxygenase; part of the gene cluster that mediates the biosynthesis of the isocyanide xanthocillin and its derivatives. The first step of the pathway consists in the conversion of tyrosine into a vinyl-isonitrile intermediate by the isocyanide synthase xanB. Subsequent oxidative dimerization of this intermediate to form xanthocillin may involve the cytochrome P450 monooxygenase xanG, whose expression is coregulated with that of XanB. Xanthocillin can be further modified by the isonitrile hydratase-like protein xanA which introduces N-formyl groups and the methyltransferase xanE which introduces methyl groups, leading to the production of several derivatives including fumiformamide. Finally, fumiformamide can be subject to both oxidative and reductive cyclization to yield melanocins E and F, respectively. The sequence is that of Cytochrome P450 monooxygenase xanG from Aspergillus fumigatus (strain ATCC MYA-4609 / CBS 101355 / FGSC A1100 / Af293) (Neosartorya fumigata).